The primary structure comprises 1080 residues: Probable E3 ubiquitin-protein ligase bre1 (1080 aa).

The segment covering 1-21 has biased composition (basic and acidic residues); the sequence is MSMDHQDLKRRDPPADSESQR. Residues 1-37 are disordered; that stretch reads MSMDHQDLKRRDPPADSESQRPSKKISLSSSEASVPI. The segment covering 25-34 has biased composition (low complexity); sequence KISLSSSEAS. 3 coiled-coil regions span residues 50–91, 149–169, and 196–269; these read QNRA…CLCR, LQKK…ALEK, and LKED…LQDE. Disordered stretches follow at residues 274–335, 721–742, and 991–1016; these read PQVK…QQSN, NGNN…TINN, and TSAN…SSSE. Low complexity-rich tracts occupy residues 284–312 and 319–330; these read GSNI…NNGN and SSSLASSTNGIN. Residues 331–1003 are a coiled coil; sequence KQQSNDINGK…NNNNNNNNNN (673 aa). The segment covering 994 to 1014 has biased composition (low complexity); the sequence is NNNNNNNNNNNNNNNNNNSSS. The segment at 1028–1067 adopts an RING-type zinc-finger fold; it reads CTICNDRQKNYVIAKCFHVFCKECIYSNIDTRKRRCPSCN.

This sequence belongs to the BRE1 family.

The protein localises to the nucleus. It carries out the reaction S-ubiquitinyl-[E2 ubiquitin-conjugating enzyme]-L-cysteine + [acceptor protein]-L-lysine = [E2 ubiquitin-conjugating enzyme]-L-cysteine + N(6)-ubiquitinyl-[acceptor protein]-L-lysine.. The protein operates within protein modification; protein ubiquitination. E3 ubiquitin-protein ligase that mediates monoubiquitination of histone H2B. This chain is Probable E3 ubiquitin-protein ligase bre1 (bre1), found in Dictyostelium discoideum (Social amoeba).